Reading from the N-terminus, the 140-residue chain is Putative pre-16S rRNA nuclease (140 aa).

This sequence belongs to the YqgF nuclease family.

The protein resides in the cytoplasm. Functionally, could be a nuclease involved in processing of the 5'-end of pre-16S rRNA. The chain is Putative pre-16S rRNA nuclease from Endomicrobium trichonymphae.